The primary structure comprises 415 residues: Dihydroorotase (415 aa).

Zn(2+) contacts are provided by histidine 54 and histidine 56. Residues 56 to 58 (HFR) and asparagine 88 each bind substrate. Residues lysine 136, histidine 169, histidine 217, and aspartate 278 each contribute to the Zn(2+) site. Residue lysine 136 is modified to N6-carboxylysine. Residue aspartate 278 is part of the active site. Residue histidine 282 participates in substrate binding.

It belongs to the metallo-dependent hydrolases superfamily. DHOase family. Class I DHOase subfamily. Zn(2+) serves as cofactor.

The enzyme catalyses (S)-dihydroorotate + H2O = N-carbamoyl-L-aspartate + H(+). The protein operates within pyrimidine metabolism; UMP biosynthesis via de novo pathway; (S)-dihydroorotate from bicarbonate: step 3/3. Functionally, catalyzes the reversible cyclization of carbamoyl aspartate to dihydroorotate. This chain is Dihydroorotase, found in Thermoplasma volcanium (strain ATCC 51530 / DSM 4299 / JCM 9571 / NBRC 15438 / GSS1).